Here is a 284-residue protein sequence, read N- to C-terminus: 2-dehydro-3-deoxyphosphooctonate aldolase (284 aa).

The protein belongs to the KdsA family.

It is found in the cytoplasm. It carries out the reaction D-arabinose 5-phosphate + phosphoenolpyruvate + H2O = 3-deoxy-alpha-D-manno-2-octulosonate-8-phosphate + phosphate. It participates in carbohydrate biosynthesis; 3-deoxy-D-manno-octulosonate biosynthesis; 3-deoxy-D-manno-octulosonate from D-ribulose 5-phosphate: step 2/3. The protein operates within bacterial outer membrane biogenesis; lipopolysaccharide biosynthesis. The polypeptide is 2-dehydro-3-deoxyphosphooctonate aldolase (Burkholderia cenocepacia (strain ATCC BAA-245 / DSM 16553 / LMG 16656 / NCTC 13227 / J2315 / CF5610) (Burkholderia cepacia (strain J2315))).